We begin with the raw amino-acid sequence, 293 residues long: Lymphocyte antigen 6 complex locus protein G6f (293 aa).

Residues 1 to 19 form the signal peptide; that stretch reads MAMVVFLLLYLCGHPQAAA. In terms of domain architecture, Ig-like V-type spans 20–124; the sequence is DNIQTLYVPS…HKYQNWRVYD (105 aa). Residues 20 to 237 lie on the Extracellular side of the membrane; it reads DNIQTLYVPS…APLPSWDVSW (218 aa). A disulfide bridge links cysteine 37 with cysteine 108. N-linked (GlcNAc...) asparagine glycosylation occurs at asparagine 90. The chain crosses the membrane as a helical span at residues 238-258; sequence ILMLLFAAGQGVTIIALSIVI. At 259–293 the chain is on the cytoplasmic side; that stretch reads WRHQRAQGTQDREPSIPHFKPEVQVYENIHLARLR. A Phosphotyrosine modification is found at tyrosine 284.

In terms of assembly, homodimer; disulfide-linked. Interacts with GRB2 and GRB7 in a phosphorylation-dependent manner. In terms of processing, N-glycosylated.

It localises to the cell membrane. Functionally, may play a role in the downstream signal transduction pathways involving GRB2 and GRB7. The chain is Lymphocyte antigen 6 complex locus protein G6f (Ly6g6f) from Rattus norvegicus (Rat).